Reading from the N-terminus, the 562-residue chain is Tryptophan 2-monooxygenase (562 aa).

Positions 54, 74, 76, 82, and 104 each coordinate FMN. Position 104 (arginine 104) interacts with substrate.

Belongs to the tryptophan 2-monooxygenase family. The cofactor is FMN.

The catalysed reaction is L-tryptophan + O2 = indole-3-acetamide + CO2 + H2O. It functions in the pathway plant hormone metabolism; auxin biosynthesis. This Pantoea agglomerans pv. gypsophilae (Erwinia herbicola) protein is Tryptophan 2-monooxygenase (iaaM).